Reading from the N-terminus, the 1403-residue chain is Baculoviral IAP repeat-containing protein 1a (1403 aa).

3 BIR repeats span residues Arg63 to Gln128, Arg162 to Gln228, and Arg281 to Gln346. Zn(2+)-binding residues include Cys315, Cys318, His335, and Cys342. The 295-residue stretch at Ser464 to Glu758 folds into the NACHT domain. Residue Lys476 coordinates ATP.

As to quaternary structure, interacts (via NACHT domain) with APAF1 (via CARD and NACHT domains).

Functionally, anti-apoptotic protein which acts by inhibiting the activities of CASP3, CASP7 and CASP9. Can inhibit the autocleavage of pro-CASP9 and cleavage of pro-CASP3 by CASP9. Capable of inhibiting CASP9 autoproteolysis at 'Asp-315' and decreasing the rate of auto proteolysis at 'Asp-330'. Acts as a mediator of neuronal survival in pathological conditions. Prevents motor-neuron apoptosis induced by a variety of signals. The chain is Baculoviral IAP repeat-containing protein 1a (Naip1) from Mus musculus (Mouse).